Here is a 206-residue protein sequence, read N- to C-terminus: Small ribosomal subunit protein uS4 (206 aa).

In terms of domain architecture, S4 RNA-binding spans 96–156; it reads GRLDNVVYRM…EKAKKQSRVK (61 aa).

This sequence belongs to the universal ribosomal protein uS4 family. In terms of assembly, part of the 30S ribosomal subunit. Contacts protein S5. The interaction surface between S4 and S5 is involved in control of translational fidelity.

One of the primary rRNA binding proteins, it binds directly to 16S rRNA where it nucleates assembly of the body of the 30S subunit. In terms of biological role, with S5 and S12 plays an important role in translational accuracy. The sequence is that of Small ribosomal subunit protein uS4 from Salmonella typhi.